The following is a 267-amino-acid chain: Membrane-spanning 4-domains subfamily A member 10 (267 aa).

At 1–56 the chain is on the cytoplasmic side; the sequence is MAGQAPTAVPGSVTGEVSRWQNLGPAQPAQKVAQPQNLVPDGHLEKALEGSDLLQK. The helical transmembrane segment at 57 to 77 threads the bilayer; sequence LGGFHIAIAFAHLAFGGYLIS. Topologically, residues 78–83 are extracellular; that stretch reads TVKNLH. The chain crosses the membrane as a helical span at residues 84 to 104; it reads LVVLKCWYPLWGTVSFLVAGM. Over 105–118 the chain is Cytoplasmic; the sequence is AAMTTVTFPKTSLK. A helical transmembrane segment spans residues 119-139; the sequence is VLCVIANVISLFCALAGFFVI. Over 140–168 the chain is Extracellular; that stretch reads AKDLFLEGPFPWPIWRPYPEPTTYIQRLE. A helical membrane pass occupies residues 169 to 189; sequence LTLFCFTFLEIFLSGSTAITA. Residues 190 to 267 are Cytoplasmic-facing; sequence YRMKRLQAED…LHTGPRTLRK (78 aa).

Belongs to the MS4A family. As to expression, expressed in thymus, kidney, colon, brain and testis. Expressed also by various hematopoietic and lymphoblastoid cell lines.

The protein resides in the membrane. Functionally, may be involved in signal transduction as a component of a multimeric receptor complex. In Mus musculus (Mouse), this protein is Membrane-spanning 4-domains subfamily A member 10 (Ms4a10).